Reading from the N-terminus, the 361-residue chain is 3-dehydroquinate synthase (361 aa).

NAD(+) is bound by residues 72-77 (SGEKEK), 130-131 (TT), Lys-142, and Lys-151. The Zn(2+) site is built by Glu-184, His-247, and His-264.

It belongs to the sugar phosphate cyclases superfamily. Dehydroquinate synthase family. Co(2+) is required as a cofactor. Zn(2+) serves as cofactor. The cofactor is NAD(+).

The protein resides in the cytoplasm. The catalysed reaction is 7-phospho-2-dehydro-3-deoxy-D-arabino-heptonate = 3-dehydroquinate + phosphate. It participates in metabolic intermediate biosynthesis; chorismate biosynthesis; chorismate from D-erythrose 4-phosphate and phosphoenolpyruvate: step 2/7. In terms of biological role, catalyzes the conversion of 3-deoxy-D-arabino-heptulosonate 7-phosphate (DAHP) to dehydroquinate (DHQ). The protein is 3-dehydroquinate synthase of Bacillus cereus (strain ZK / E33L).